A 445-amino-acid polypeptide reads, in one-letter code: Inward rectifier potassium channel 4 (445 aa).

Topologically, residues M1–W55 are cytoplasmic. The helical transmembrane segment at R56–I80 threads the bilayer. Topologically, residues A81–G120 are extracellular. Residues P91–P111 are val/Gly/Ala/Pro stretch. Residues F121 to Q132 constitute an intramembrane region (helical; Pore-forming). Residues T133 to F139 constitute an intramembrane region (pore-forming). Residues T134–F139 carry the Selectivity filter motif. The Extracellular segment spans residues R140–L148. Residues A149–T170 form a helical membrane-spanning segment. Over I171–I445 the chain is Cytoplasmic. Positions S443 to I445 match the PDZ-binding motif.

Belongs to the inward rectifier-type potassium channel (TC 1.A.2.1) family. KCNJ4 subfamily. As to quaternary structure, homomultimeric and heteromultimeric association with KCNJ2 and KCNJ12. Interacts with DLG2 and DLG4. Associates, via its PDZ-recognition domain, with a complex containing LIN7A, LIN7B, LIN7C, DLG1, CASK and APBA1. Interacts with TAX1BP3. TAX1BP3 competes with LIN7 family members for KCNJ4 binding. Heart, skeletal muscle, and several different brain regions including the hippocampus.

It is found in the cell membrane. Its subcellular location is the postsynaptic cell membrane. The protein resides in the cytoplasmic vesicle membrane. It carries out the reaction K(+)(in) = K(+)(out). Its function is as follows. Inward rectifier potassium channels are characterized by a greater tendency to allow potassium to flow into the cell rather than out of it. Their voltage dependence is regulated by the concentration of extracellular potassium; as external potassium is raised, the voltage range of the channel opening shifts to more positive voltages. The inward rectification is mainly due to the blockage of outward current by internal magnesium. Can be blocked by extracellular barium and cesium. This chain is Inward rectifier potassium channel 4 (KCNJ4), found in Homo sapiens (Human).